Consider the following 507-residue polypeptide: RNA-splicing ligase RtcB homolog (507 aa).

Mn(2+)-binding residues include Asp121, Cys124, His229, His261, and His355. GMP is bound at residue 228–232 (NHYGE). GMP is bound by residues 355-356 (HN), 404-407 (GGTM), Ser411, 430-433 (HGSG), and Lys506. The GMP-histidine intermediate role is filled by His430.

Belongs to the RtcB family. As to quaternary structure, catalytic component of the tRNA-splicing ligase complex. It depends on Mn(2+) as a cofactor.

The catalysed reaction is a 3'-end 3'-phospho-ribonucleotide-RNA + a 5'-end dephospho-ribonucleoside-RNA + GTP = a ribonucleotidyl-ribonucleotide-RNA + GMP + diphosphate. It catalyses the reaction a 3'-end 2',3'-cyclophospho-ribonucleotide-RNA + a 5'-end dephospho-ribonucleoside-RNA + GTP + H2O = a ribonucleotidyl-ribonucleotide-RNA + GMP + diphosphate + H(+). Its function is as follows. Catalytic subunit of the tRNA-splicing ligase complex that acts by directly joining spliced tRNA halves to mature-sized tRNAs by incorporating the precursor-derived splice junction phosphate into the mature tRNA as a canonical 3',5'-phosphodiester. May act as an RNA ligase with broad substrate specificity, and may function toward other RNAs. This Theileria parva (East coast fever infection agent) protein is RNA-splicing ligase RtcB homolog.